The sequence spans 603 residues: Elongation factor 4 (603 aa).

The 183-residue stretch at 5–187 folds into the tr-type G domain; the sequence is RHIRNFCIIA…AVVNFVPPPK (183 aa). GTP-binding positions include 17–22 and 134–137; these read DHGKST and NKID.

It belongs to the TRAFAC class translation factor GTPase superfamily. Classic translation factor GTPase family. LepA subfamily.

It localises to the cell membrane. It carries out the reaction GTP + H2O = GDP + phosphate + H(+). Its function is as follows. Required for accurate and efficient protein synthesis under certain stress conditions. May act as a fidelity factor of the translation reaction, by catalyzing a one-codon backward translocation of tRNAs on improperly translocated ribosomes. Back-translocation proceeds from a post-translocation (POST) complex to a pre-translocation (PRE) complex, thus giving elongation factor G a second chance to translocate the tRNAs correctly. Binds to ribosomes in a GTP-dependent manner. The protein is Elongation factor 4 of Symbiobacterium thermophilum (strain DSM 24528 / JCM 14929 / IAM 14863 / T).